A 264-amino-acid polypeptide reads, in one-letter code: Phosphate import ATP-binding protein PstB (264 aa).

Residues 11–250 enclose the ABC transporter domain; the sequence is LKAEALSVYY…DTTEKIFDSP (240 aa). ATP is bound at residue 43-50; the sequence is GPSGCGKS.

This sequence belongs to the ABC transporter superfamily. Phosphate importer (TC 3.A.1.7) family. As to quaternary structure, the complex is composed of two ATP-binding proteins (PstB), two transmembrane proteins (PstC and PstA) and a solute-binding protein (PstS).

It is found in the cell inner membrane. It catalyses the reaction phosphate(out) + ATP + H2O = ADP + 2 phosphate(in) + H(+). In terms of biological role, part of the ABC transporter complex PstSACB involved in phosphate import. Responsible for energy coupling to the transport system. The protein is Phosphate import ATP-binding protein PstB of Synechococcus sp. (strain ATCC 27144 / PCC 6301 / SAUG 1402/1) (Anacystis nidulans).